We begin with the raw amino-acid sequence, 118 residues long: Large ribosomal subunit protein bL19 (118 aa).

Belongs to the bacterial ribosomal protein bL19 family.

Functionally, this protein is located at the 30S-50S ribosomal subunit interface and may play a role in the structure and function of the aminoacyl-tRNA binding site. This Ligilactobacillus salivarius (strain UCC118) (Lactobacillus salivarius) protein is Large ribosomal subunit protein bL19.